Reading from the N-terminus, the 513-residue chain is Maturase K (513 aa).

Belongs to the intron maturase 2 family. MatK subfamily.

The protein resides in the plastid. The protein localises to the chloroplast. Its function is as follows. Usually encoded in the trnK tRNA gene intron. Probably assists in splicing its own and other chloroplast group II introns. This Pinus resinosa (Red pine) protein is Maturase K.